We begin with the raw amino-acid sequence, 385 residues long: Single-stranded DNA-binding protein 4 (385 aa).

Methionine 1 carries the post-translational modification N-acetylmethionine. One can recognise a LisH domain in the interval 17 to 49; it reads AREKLALYVYEYLLHIGAQKSAQTFLSEIRWEK. Disordered stretches follow at residues 122–287 and 331–363; these read FQGP…NSSE and GSGDMDGLPKSSPGAVAGLSNAPGTPRDDGEMA. Low complexity predominate over residues 245 to 263; the sequence is SPSGNSIPYSSSSPGSYTG. A compositionally biased stretch (pro residues) spans 267-277; the sequence is GGGPPGTPIMP. At serine 341 the chain carries Phosphoserine. Phosphothreonine is present on threonine 355.

The protein resides in the nucleus. The chain is Single-stranded DNA-binding protein 4 (SSBP4) from Homo sapiens (Human).